We begin with the raw amino-acid sequence, 249 residues long: Geranylgeranylglyceryl phosphate synthase (249 aa).

Asp20 and Ser49 together coordinate Mg(2+). Residues 169-175, 200-201, and 222-223 each bind sn-glycerol 1-phosphate; these read YLDAGSG, GG, and GN.

This sequence belongs to the GGGP/HepGP synthase family. Group II subfamily. Homohexamer. The cofactor is Mg(2+).

The enzyme catalyses sn-glycerol 1-phosphate + (2E,6E,10E)-geranylgeranyl diphosphate = sn-3-O-(geranylgeranyl)glycerol 1-phosphate + diphosphate. Prenyltransferase that catalyzes the transfer of the geranylgeranyl moiety of geranylgeranyl diphosphate (GGPP) to the C3 hydroxyl of sn-glycerol-1-phosphate (G1P). The polypeptide is Geranylgeranylglyceryl phosphate synthase (Spirosoma linguale (strain ATCC 33905 / DSM 74 / LMG 10896 / Claus 1)).